Here is a 252-residue protein sequence, read N- to C-terminus: 3-dehydroquinate dehydratase (252 aa).

Residues Ser-21, 46-48 (EWR), and Arg-82 contribute to the 3-dehydroquinate site. His-143 serves as the catalytic Proton donor/acceptor. Lys-170 serves as the catalytic Schiff-base intermediate with substrate. 3-dehydroquinate contacts are provided by Arg-213, Ser-232, and Gln-236.

Belongs to the type-I 3-dehydroquinase family. In terms of assembly, homodimer.

It carries out the reaction 3-dehydroquinate = 3-dehydroshikimate + H2O. Its pathway is metabolic intermediate biosynthesis; chorismate biosynthesis; chorismate from D-erythrose 4-phosphate and phosphoenolpyruvate: step 3/7. Functionally, involved in the third step of the chorismate pathway, which leads to the biosynthesis of aromatic amino acids. Catalyzes the cis-dehydration of 3-dehydroquinate (DHQ) and introduces the first double bond of the aromatic ring to yield 3-dehydroshikimate. The polypeptide is 3-dehydroquinate dehydratase (Salmonella agona (strain SL483)).